A 233-amino-acid chain; its full sequence is Purine nucleoside phosphorylase DeoD-type (233 aa).

Residue H4 participates in a purine D-ribonucleoside binding. Residues G20, R24, R43, and R87 to T90 contribute to the phosphate site. A purine D-ribonucleoside is bound by residues E178–E180 and S202–D203. The Proton donor role is filled by D203.

This sequence belongs to the PNP/UDP phosphorylase family. Homohexamer; trimer of homodimers.

The catalysed reaction is a purine D-ribonucleoside + phosphate = a purine nucleobase + alpha-D-ribose 1-phosphate. The enzyme catalyses a purine 2'-deoxy-D-ribonucleoside + phosphate = a purine nucleobase + 2-deoxy-alpha-D-ribose 1-phosphate. Functionally, catalyzes the reversible phosphorolytic breakdown of the N-glycosidic bond in the beta-(deoxy)ribonucleoside molecules, with the formation of the corresponding free purine bases and pentose-1-phosphate. In Listeria monocytogenes serotype 4b (strain CLIP80459), this protein is Purine nucleoside phosphorylase DeoD-type.